The following is a 259-amino-acid chain: Short-chain dehydrogenase chry4 (259 aa).

NADP(+) is bound by residues R37, D55, N81, Y154, K158, V185, and T187. Y154 serves as the catalytic Proton donor. Residue K158 is the Lowers pKa of active site Tyr of the active site.

This sequence belongs to the short-chain dehydrogenases/reductases (SDR) family.

Its pathway is pigment biosynthesis. In terms of biological role, short-chain dehydrogenase; part of the gene cluster that mediates the biosynthesis of the yellow pigment chrysogine. Pyruvic acid and anthranilic acid are likely substrates for the nonribosomal peptide synthetase chry1/NRPS14, with pyruvic acid adenylated by the first A domain and anthranilic acid by the second. If pyruvic acid and anthranilic acid are merged and released from chry1/NRPS14 by hydrolysis, a subsequent amidation would lead to 2-pyruvoylaminobenzamide. This process is probably catalyzed by the amidotransferase chry2 using glutamine as amino donor. The dehydrogenase chry5 that has a terminal berberine bridge domain for C-N cyclization could catalyze the cyclization of 2-pyruvoylaminobenzamide to yield acetyl-4(3H)-quinazolidinone. A final reduction of acetyl-4(3H)-quinazolidinone catalyzed by the oxidoreductase chry4 would result in chrysogine. This is Short-chain dehydrogenase chry4 from Gibberella zeae (strain ATCC MYA-4620 / CBS 123657 / FGSC 9075 / NRRL 31084 / PH-1) (Wheat head blight fungus).